Here is a 333-residue protein sequence, read N- to C-terminus: Holliday junction branch migration complex subunit RuvB (333 aa).

The interval 1–182 (MDERLVSGSA…FGVISRLEYY (182 aa)) is large ATPase domain (RuvB-L). Residues L21, R22, G63, K66, T67, T68, 129 to 131 (EDY), R172, Y182, and R219 each bind ATP. A Mg(2+)-binding site is contributed by T67. Positions 183–253 (QVDQLAQIIE…LAVEALERLQ (71 aa)) are small ATPAse domain (RuvB-S). The head domain (RuvB-H) stretch occupies residues 256-333 (RLGLDHIDHK…AHLGMEVPKR (78 aa)). The DNA site is built by R311 and R316.

The protein belongs to the RuvB family. As to quaternary structure, homohexamer. Forms an RuvA(8)-RuvB(12)-Holliday junction (HJ) complex. HJ DNA is sandwiched between 2 RuvA tetramers; dsDNA enters through RuvA and exits via RuvB. An RuvB hexamer assembles on each DNA strand where it exits the tetramer. Each RuvB hexamer is contacted by two RuvA subunits (via domain III) on 2 adjacent RuvB subunits; this complex drives branch migration. In the full resolvosome a probable DNA-RuvA(4)-RuvB(12)-RuvC(2) complex forms which resolves the HJ.

Its subcellular location is the cytoplasm. The enzyme catalyses ATP + H2O = ADP + phosphate + H(+). Its function is as follows. The RuvA-RuvB-RuvC complex processes Holliday junction (HJ) DNA during genetic recombination and DNA repair, while the RuvA-RuvB complex plays an important role in the rescue of blocked DNA replication forks via replication fork reversal (RFR). RuvA specifically binds to HJ cruciform DNA, conferring on it an open structure. The RuvB hexamer acts as an ATP-dependent pump, pulling dsDNA into and through the RuvAB complex. RuvB forms 2 homohexamers on either side of HJ DNA bound by 1 or 2 RuvA tetramers; 4 subunits per hexamer contact DNA at a time. Coordinated motions by a converter formed by DNA-disengaged RuvB subunits stimulates ATP hydrolysis and nucleotide exchange. Immobilization of the converter enables RuvB to convert the ATP-contained energy into a lever motion, pulling 2 nucleotides of DNA out of the RuvA tetramer per ATP hydrolyzed, thus driving DNA branch migration. The RuvB motors rotate together with the DNA substrate, which together with the progressing nucleotide cycle form the mechanistic basis for DNA recombination by continuous HJ branch migration. Branch migration allows RuvC to scan DNA until it finds its consensus sequence, where it cleaves and resolves cruciform DNA. The sequence is that of Holliday junction branch migration complex subunit RuvB from Geobacillus thermodenitrificans (strain NG80-2).